The primary structure comprises 399 residues: Methylthioribose kinase (399 aa).

ATP is bound by residues N40, K57, and 111–113 (EDL). Substrate is bound at residue D229. 246-248 (DAE) provides a ligand contact to ATP. A substrate-binding site is contributed by R344.

This sequence belongs to the methylthioribose kinase family. As to quaternary structure, homodimer.

It carries out the reaction 5-(methylsulfanyl)-D-ribose + ATP = 5-(methylsulfanyl)-alpha-D-ribose 1-phosphate + ADP + H(+). It participates in amino-acid biosynthesis; L-methionine biosynthesis via salvage pathway; S-methyl-5-thio-alpha-D-ribose 1-phosphate from S-methyl-5'-thioadenosine (hydrolase route): step 2/2. In terms of biological role, catalyzes the phosphorylation of methylthioribose into methylthioribose-1-phosphate. The protein is Methylthioribose kinase of Erwinia tasmaniensis (strain DSM 17950 / CFBP 7177 / CIP 109463 / NCPPB 4357 / Et1/99).